The following is a 227-amino-acid chain: Ribonuclease 3 (227 aa).

An RNase III domain is found at Leu-4–Gly-126. Glu-39 lines the Mg(2+) pocket. Asp-43 is an active-site residue. Asp-112 and Glu-115 together coordinate Mg(2+). Glu-115 is an active-site residue. A DRBM domain is found at Asp-153–Ile-226.

Belongs to the ribonuclease III family. As to quaternary structure, homodimer. The cofactor is Mg(2+).

The protein resides in the cytoplasm. It carries out the reaction Endonucleolytic cleavage to 5'-phosphomonoester.. Functionally, digests double-stranded RNA. Involved in the processing of primary rRNA transcript to yield the immediate precursors to the large and small rRNAs (23S and 16S). Processes some mRNAs, and tRNAs when they are encoded in the rRNA operon. Processes pre-crRNA and tracrRNA of type II CRISPR loci if present in the organism. This Haemophilus influenzae (strain 86-028NP) protein is Ribonuclease 3.